A 301-amino-acid chain; its full sequence is uncharacterized protein (301 aa).

The HTH lysR-type domain maps to 1–58 (MDIRHLTYFLEVARLKSFTKASQSLYVSQPTISKMIKNLEEELGIELFYRNGRQVELT). A DNA-binding region (H-T-H motif) is located at residues 18–37 (FTKASQSLYVSQPTISKMIK).

It belongs to the LysR transcriptional regulatory family.

This is an uncharacterized protein from Bacillus subtilis (strain 168).